The following is a 498-amino-acid chain: MNENTKVIKGRTGDWEMVLGLEVHAQVASKSKLFSGAAVGFGAGPNEQVSLVDAAMPGMLPVLNRFCVEQAVKTGLGLRAQINLKSRFDRKNYFYPDLPQGYQISQFDQPIVGEGVVSVERDDGTTFDVRIERLHLEQDAGKSLHDQDPNATYVDLNRAGTALMEIVSKPDMRTSEEAAAYVKKLRTILVYLGTCDGDMEKGNLRADVNVSVCRPGDYEKFRATGDFKHLGTRCEIKNVNSYRYIQQAIEYEARRQIEILEDGGKVDQETRLFDPTKGETRSMRSKEEAHDYRYFPDPDLLPLVLDPAWVKSIEETLPELPDAKKARLQSQYGLSAYDAGVLIIDADRADYFEAAAKGRDAKLVANWVTNELLAKLSAAGTEFTNSPLPHTDIAQLVELIENGTISSKIAKEVFEHMWAGEGRPAEIVEKRGLVQINDTGAIEKAIDDLIAGNPDKAEAVKDKPQALGWFVGQVMKATGGKANPGTVNELLRKKLGVE.

Belongs to the GatB/GatE family. GatB subfamily. Heterotrimer of A, B and C subunits.

It carries out the reaction L-glutamyl-tRNA(Gln) + L-glutamine + ATP + H2O = L-glutaminyl-tRNA(Gln) + L-glutamate + ADP + phosphate + H(+). It catalyses the reaction L-aspartyl-tRNA(Asn) + L-glutamine + ATP + H2O = L-asparaginyl-tRNA(Asn) + L-glutamate + ADP + phosphate + 2 H(+). Functionally, allows the formation of correctly charged Asn-tRNA(Asn) or Gln-tRNA(Gln) through the transamidation of misacylated Asp-tRNA(Asn) or Glu-tRNA(Gln) in organisms which lack either or both of asparaginyl-tRNA or glutaminyl-tRNA synthetases. The reaction takes place in the presence of glutamine and ATP through an activated phospho-Asp-tRNA(Asn) or phospho-Glu-tRNA(Gln). This Caulobacter vibrioides (strain ATCC 19089 / CIP 103742 / CB 15) (Caulobacter crescentus) protein is Aspartyl/glutamyl-tRNA(Asn/Gln) amidotransferase subunit B.